Here is a 304-residue protein sequence, read N- to C-terminus: Oxygen-dependent coproporphyrinogen-III oxidase (304 aa).

Position 94 (S94) interacts with substrate. A divalent metal cation-binding residues include H98 and H108. H108 acts as the Proton donor in catalysis. 110–112 (NVR) is a substrate binding site. A divalent metal cation contacts are provided by H147 and H177. Residues 242–277 (YVEFNLVYDRGTLFGLQTGGRTESILMSMPPLVRWQ) form an important for dimerization region. 260 to 262 (GGR) serves as a coordination point for substrate.

The protein belongs to the aerobic coproporphyrinogen-III oxidase family. As to quaternary structure, homodimer. The cofactor is a divalent metal cation.

It localises to the cytoplasm. It carries out the reaction coproporphyrinogen III + O2 + 2 H(+) = protoporphyrinogen IX + 2 CO2 + 2 H2O. The protein operates within porphyrin-containing compound metabolism; protoporphyrin-IX biosynthesis; protoporphyrinogen-IX from coproporphyrinogen-III (O2 route): step 1/1. In terms of biological role, involved in the heme biosynthesis. Catalyzes the aerobic oxidative decarboxylation of propionate groups of rings A and B of coproporphyrinogen-III to yield the vinyl groups in protoporphyrinogen-IX. The protein is Oxygen-dependent coproporphyrinogen-III oxidase of Shewanella amazonensis (strain ATCC BAA-1098 / SB2B).